The primary structure comprises 249 residues: Uridylate kinase (249 aa).

21-24 (KLSG) is an ATP binding site. Gly-63 serves as a coordination point for UMP. The ATP site is built by Gly-64 and Arg-68. Residues Asp-84 and 145–152 (TGNPFVTT) each bind UMP. ATP contacts are provided by Thr-172, Tyr-178, and Asp-181.

Belongs to the UMP kinase family. Homohexamer.

It is found in the cytoplasm. It carries out the reaction UMP + ATP = UDP + ADP. Its pathway is pyrimidine metabolism; CTP biosynthesis via de novo pathway; UDP from UMP (UMPK route): step 1/1. Inhibited by UTP. In terms of biological role, catalyzes the reversible phosphorylation of UMP to UDP. In Francisella tularensis subsp. tularensis (strain FSC 198), this protein is Uridylate kinase.